A 734-amino-acid polypeptide reads, in one-letter code: Protein SKG6 (734 aa).

Residues 30 to 68 (TRRDDSDSSSSSASSTKNSKSAECTGSKQQCQLPTDSSH) are disordered. A compositionally biased stretch (low complexity) spans 37–51 (SSSSSASSTKNSKSA). The span at 53-68 (CTGSKQQCQLPTDSSH) shows a compositional bias: polar residues. A helical membrane pass occupies residues 72-96 (VTVGVAVAVPVGVIIIVLAVILCIV). S137 bears the Phosphoserine mark. A Phosphothreonine modification is found at T169. 3 positions are modified to phosphoserine: S191, S193, and S219. T221 is modified (phosphothreonine). Residues S222 and S251 each carry the phosphoserine modification. Residues 239 to 327 (RFQESESFRS…LRFGKDDDNY (89 aa)) form a disordered region. The segment covering 253–273 (IHNNQLSRGSATEGANKQFTF) has biased composition (polar residues). The segment covering 280–299 (SSSVSEEAEVLNESNESASN) has biased composition (low complexity). A compositionally biased stretch (basic and acidic residues) spans 309–327 (SSEKTHERNLRFGKDDDNY). Residue S369 is modified to Phosphoserine. The interval 647–671 (DLTAKPSYKPAGSFRSVSATNSRNN) is disordered. Polar residues predominate over residues 661-671 (RSVSATNSRNN). Phosphoserine is present on residues S672 and S717. The interval 707-734 (SVGGILPHSGSQDDLRKQLGSSHNYTVN) is disordered. The span at 725-734 (LGSSHNYTVN) shows a compositional bias: polar residues.

It belongs to the SKG6/TOS2 family. In terms of assembly, interacts with ZDS1 and ZDS2. In terms of processing, phosphorylated by CDC28.

The protein localises to the membrane. In terms of biological role, may be involved in the polarity establishment process. Suppresses the lethality of KEX2-GAS1 double null mutant when overexpressed. The protein is Protein SKG6 (SKG6) of Saccharomyces cerevisiae (strain ATCC 204508 / S288c) (Baker's yeast).